Here is a 140-residue protein sequence, read N- to C-terminus: Large ribosomal subunit protein uL11 (140 aa).

It belongs to the universal ribosomal protein uL11 family. In terms of assembly, part of the ribosomal stalk of the 50S ribosomal subunit. Interacts with L10 and the large rRNA to form the base of the stalk. L10 forms an elongated spine to which L12 dimers bind in a sequential fashion forming a multimeric L10(L12)X complex. One or more lysine residues are methylated.

Forms part of the ribosomal stalk which helps the ribosome interact with GTP-bound translation factors. The chain is Large ribosomal subunit protein uL11 from Enterococcus faecalis (strain ATCC 700802 / V583).